We begin with the raw amino-acid sequence, 475 residues long: MAKKIKDDADKNAETTKKEVLLEAKEEIHKLRNEFERESRERRNELQRVERRLMQKEESLDKKSETLEQKDDRLSRKLRDLETKEEEIKLLYNKEVQKLEELSGLTSQQARELLLSDVEKEVKYEAAMMVKDIETKAKDDADKKAREIITLAIQKCAADHVAETTVTVVQLPNDEMKGRIIGREGRNIRTLETLTGIDLIIDDTPEAVILSGFDPIRREVARIALEKLIADGRIHPARIEEMVEKAKKEVENILKEEGEQATFDTGVHGLHPELIRLLGRLKYRTSYGQNVLKHAIEVSHLAGLMATELGADPKLAKRAGLLHDIGKAVDHEVEGTHIEIGMELLRKYKETKDVIHAMSTHHGDFEPETIEAILVTAADAISAARPGARRETLESYIKRLEKLEDIANNYDGVEKSFAIQAGREIRIIVKPEVYNDDEIYMFAREITKKIEADLEYPGQIKVNVIRETRAIEYAK.

Positions 34–73 are disordered; sequence EFERESRERRNELQRVERRLMQKEESLDKKSETLEQKDDR. The region spanning 165-228 is the KH domain; that stretch reads TVTVVQLPND…EVARIALEKL (64 aa). In terms of domain architecture, HD spans 291–384; it reads VLKHAIEVSH…VTAADAISAA (94 aa).

This sequence belongs to the RNase Y family.

Endoribonuclease that initiates mRNA decay. This is Ribonuclease Y from Alkaliphilus metalliredigens (strain QYMF).